A 112-amino-acid chain; its full sequence is Colipase (112 aa).

An N-terminal signal peptide occupies residues 1–17 (MKVLVVLLVTLVAVAYA). Residues 18–22 (APGPR) constitute a propeptide, enterostatin, activation peptide. Cystine bridges form between Cys34/Cys45, Cys40/Cys56, Cys44/Cys78, Cys66/Cys86, and Cys80/Cys104.

This sequence belongs to the colipase family. In terms of assembly, forms a 1:1 stoichiometric complex with pancreatic lipase. As to expression, expressed by the pancreas.

Its subcellular location is the secreted. Its function is as follows. Colipase is a cofactor of pancreatic lipase. It allows the lipase to anchor itself to the lipid-water interface. Without colipase the enzyme is washed off by bile salts, which have an inhibitory effect on the lipase. In terms of biological role, enterostatin has a biological activity as a satiety signal. This Rattus norvegicus (Rat) protein is Colipase.